The primary structure comprises 603 residues: uncharacterized protein (603 aa).

A disordered region spans residues 257–281 (AGEAASSDHDQKISRVTRKRPREPK).

This is an uncharacterized protein from Saccharomyces cerevisiae (strain ATCC 204508 / S288c) (Baker's yeast).